The chain runs to 122 residues: Large ribosomal subunit protein uL14 (122 aa).

The protein belongs to the universal ribosomal protein uL14 family. As to quaternary structure, part of the 50S ribosomal subunit. Forms a cluster with proteins L3 and L19. In the 70S ribosome, L14 and L19 interact and together make contacts with the 16S rRNA in bridges B5 and B8.

Its function is as follows. Binds to 23S rRNA. Forms part of two intersubunit bridges in the 70S ribosome. This chain is Large ribosomal subunit protein uL14, found in Bordetella parapertussis (strain 12822 / ATCC BAA-587 / NCTC 13253).